The primary structure comprises 187 residues: KS71A fimbrillin (187 aa).

An N-terminal signal peptide occupies residues 1-21 (MIKSVIAGAVAMAVVSFGANA). Cys43 and Cys82 are joined by a disulfide.

This sequence belongs to the fimbrial protein family.

The protein resides in the fimbrium. Its function is as follows. Fimbriae (also called pili), polar filaments radiating from the surface of the bacterium to a length of 0.5-1.5 micrometers and numbering 100-300 per cell, enable bacteria to colonize the epithelium of specific host organs. This Escherichia coli protein is KS71A fimbrillin (KS71A).